The chain runs to 251 residues: MRRKIVVGNWKMNNSVAESVQLATDVLAALGEGFSGCEVGIAPTYLALDATEKVIAESEVQLVAQNCHYENDGAFTGEVSARMILAVGCSSVIIGHSERRQYFGETNATVNLRIKKALSEGLNVILCVGETLAERESGVMETVISSQVREGLDGIIDISAIVIAYEPVWAIGTGKTASSAQAEEVHLFIRTLVTGLYGQTASEKVRIQYGGSVKPSNAAELFAMPNIDGGLIGGASLNADDFAAIVKAASV.

9 to 11 is a substrate binding site; that stretch reads NWK. His96 acts as the Electrophile in catalysis. Glu166 (proton acceptor) is an active-site residue. Substrate contacts are provided by residues Gly172, Ser212, and 233-234; that span reads GG.

This sequence belongs to the triosephosphate isomerase family. In terms of assembly, homodimer.

Its subcellular location is the cytoplasm. It catalyses the reaction D-glyceraldehyde 3-phosphate = dihydroxyacetone phosphate. It functions in the pathway carbohydrate biosynthesis; gluconeogenesis. The protein operates within carbohydrate degradation; glycolysis; D-glyceraldehyde 3-phosphate from glycerone phosphate: step 1/1. In terms of biological role, involved in the gluconeogenesis. Catalyzes stereospecifically the conversion of dihydroxyacetone phosphate (DHAP) to D-glyceraldehyde-3-phosphate (G3P). This is Triosephosphate isomerase from Pelodictyon phaeoclathratiforme (strain DSM 5477 / BU-1).